The chain runs to 875 residues: Valine--tRNA ligase (875 aa).

Positions 45–55 match the 'HIGH' region motif; that stretch reads PNVTGVLHMGH. A 'KMSKS' region motif is present at residues 524-528; it reads KMSKS. ATP is bound at residue K527. Residues 803 to 837 adopt a coiled-coil conformation; the sequence is VKLLIDKTKELIRLEKQLEKYKMLKISVSKKLENE.

It belongs to the class-I aminoacyl-tRNA synthetase family. ValS type 1 subfamily. As to quaternary structure, monomer.

The protein localises to the cytoplasm. The catalysed reaction is tRNA(Val) + L-valine + ATP = L-valyl-tRNA(Val) + AMP + diphosphate. In terms of biological role, catalyzes the attachment of valine to tRNA(Val). As ValRS can inadvertently accommodate and process structurally similar amino acids such as threonine, to avoid such errors, it has a 'posttransfer' editing activity that hydrolyzes mischarged Thr-tRNA(Val) in a tRNA-dependent manner. This Borrelia garinii subsp. bavariensis (strain ATCC BAA-2496 / DSM 23469 / PBi) (Borreliella bavariensis) protein is Valine--tRNA ligase.